A 248-amino-acid polypeptide reads, in one-letter code: Aspartate/glutamate leucyltransferase (248 aa).

It belongs to the R-transferase family. Bpt subfamily.

It is found in the cytoplasm. The enzyme catalyses N-terminal L-glutamyl-[protein] + L-leucyl-tRNA(Leu) = N-terminal L-leucyl-L-glutamyl-[protein] + tRNA(Leu) + H(+). The catalysed reaction is N-terminal L-aspartyl-[protein] + L-leucyl-tRNA(Leu) = N-terminal L-leucyl-L-aspartyl-[protein] + tRNA(Leu) + H(+). Functionally, functions in the N-end rule pathway of protein degradation where it conjugates Leu from its aminoacyl-tRNA to the N-termini of proteins containing an N-terminal aspartate or glutamate. The protein is Aspartate/glutamate leucyltransferase of Methylobacterium sp. (strain 4-46).